The chain runs to 470 residues: MCENQLKTKADATAQIEVIPCKICGDKSSGIHYGVITCEGCKGFFRRSQQNNASYSCPRQRNCLIDRTNRNRCQHCRLQKCLALGMSRDAVKFGRMSKKQRDSLYAEVQKHQQRLQEQRQQQSGEAEALARVYSSSISNGLSNLNNETSGTYANGHVIDLPKSEGYYNVDSGQPSPDQSGLDMTGIKQIKQEPIYDLTSVPNLFTYSSFNNGQLAPGITMTEIDRIAQNIIKSHLETCQYTMEELHQLAWQTHTYEEIKAYQSKSREALWQQCAIQITHAIQYVVEFAKRITGFMELCQNDQILLLKSGCLEVVLVRMCRAFNPLNNTVLFEGKYGGMQMFKALGSDDLVNEAFDFAKNLCSLQLTEEEIALFSSAVLISPDRAWLIEPRKVQKLQEKIYFALQHVIQKNHLDDETLAKLIAKIPTITAVCNLHGEKLQVFKQSHPEIVNTLFPPLYKELFNPDCATGCK.

The segment at residues 18-93 (VIPCKICGDK…LGMSRDAVKF (76 aa)) is a DNA-binding region (nuclear receptor). 2 NR C4-type zinc fingers span residues 21–41 (CKIC…CEGC) and 57–81 (CPRQ…LQKC). The span at 104–117 (LYAEVQKHQQRLQE) shows a compositional bias: basic and acidic residues. The segment at 104–127 (LYAEVQKHQQRLQEQRQQQSGEAE) is disordered. The NR LBD domain maps to 222–460 (EIDRIAQNII…TLFPPLYKEL (239 aa)). The AF-2 signature appears at 456-461 (LYKELF).

It belongs to the nuclear hormone receptor family. NR1 subfamily. As to quaternary structure, monomer. Interacts with CRX.

Its subcellular location is the nucleus. The protein localises to the nucleoplasm. Functionally, nuclear receptor that binds DNA as a monomer to ROR response elements (RORE) containing a single core motif half-site 5'-AGGTCA-3' preceded by a short A-T-rich sequence. Considered to have intrinsic transcriptional activity, have some natural ligands such as all-trans retinoic acid (ATRA) and other retinoids which act as inverse agonists repressing the transcriptional activity. Required for normal postnatal development of rod and cone photoreceptor cells. Modulates rod photoreceptors differentiation at least by inducing the transcription factor NRL-mediated pathway. In cone photoreceptor cells, regulates transcription of OPN1SW. Involved in the regulation of the period length and stability of the circadian rhythm. May control cytoarchitectural patterning of neocortical neurons during development. May act in a dose-dependent manner to regulate barrel formation upon innervation of layer IV neurons by thalamocortical axons. May play a role in the suppression of osteoblastic differentiation through the inhibition of RUNX2 transcriptional activity. Isoform 1 is critical for hindlimb motor control and for the differentiation of amacrine and horizontal cells in the retina. Regulates the expression of PTF1A synergistically with FOXN4. This is Nuclear receptor ROR-beta (RORB) from Homo sapiens (Human).